Reading from the N-terminus, the 329-residue chain is GDP-mannose transporter (329 aa).

Over 1–11 (MADKGSVAAKS) the chain is Cytoplasmic. Residues 12-32 (LTNSAPLSIFSYCAASILMTV) form a helical membrane-spanning segment. Residues 33 to 40 (TNKYAVSG) are Lumenal-facing. Residues 41 to 61 (VDFNFNFFLLAVQGIVCITLI) traverse the membrane as a helical segment. The Cytoplasmic portion of the chain corresponds to 62–83 (SSLKQLNVITFREFNKVEAKKW). Residues 84 to 104 (FPIAVLLVVMIYTSSKALQYL) form a helical membrane-spanning segment. Over 105–107 (SIP) the chain is Lumenal. Residues 108-128 (IYTIFKNLTIILIAYGEVIWF) form a helical membrane-spanning segment. Over 129–131 (GGR) the chain is Cytoplasmic. A helical transmembrane segment spans residues 132–152 (VTNLALGSFVLMVLSSAVASY). Topologically, residues 153–163 (GDSNVDTGKLN) are lumenal. The helical transmembrane segment at 164 to 184 (FNIGYFWMFTNCFSSAAFVLF) threads the bilayer. At 185–196 (MRKRIKLTNFKD) the chain is on the cytoplasmic side. A helical membrane pass occupies residues 197 to 217 (FDTMYYNNLLSIPILLFASLT). At 218-237 (TEDWSAKNIAQNFPEDTKYA) the chain is on the lumenal side. Residues 238–258 (VIASMIISGMSAVGISYTSAW) form a helical membrane-spanning segment. Over 259-266 (CVRVTSST) the chain is Cytoplasmic. The chain crosses the membrane as a helical span at residues 267–287 (TYSMVGALNKLPIALSGLLFF). The Lumenal segment spans residues 288–290 (KAP). The helical transmembrane segment at 291-311 (INFYSISSIFIGFAAGLVYAI) threads the bilayer. Residues 312-329 (AKQKQKKEDELQLPTDKS) are Cytoplasmic-facing.

This sequence belongs to the TPT transporter family. SLC35D subfamily. As to quaternary structure, homooligomer.

It is found in the golgi apparatus membrane. The protein localises to the cytoplasmic vesicle membrane. It localises to the endoplasmic reticulum membrane. Functionally, involved in the import of GDP-mannose from the cytoplasm into the Golgi lumen. This Komagataella pastoris (Yeast) protein is GDP-mannose transporter (VIG4).